A 599-amino-acid polypeptide reads, in one-letter code: Adenine deaminase (599 aa).

It belongs to the metallo-dependent hydrolases superfamily. Adenine deaminase family. Mn(2+) serves as cofactor.

It catalyses the reaction adenine + H2O + H(+) = hypoxanthine + NH4(+). The protein is Adenine deaminase of Clostridium botulinum (strain 657 / Type Ba4).